The primary structure comprises 312 residues: L-lactate dehydrogenase (312 aa).

Positions 14, 35, and 66 each coordinate NAD(+). Substrate-binding positions include Gln83, Arg90, and 122-125; that span reads NPVD. NAD(+)-binding positions include 120-122 and Ser145; that span reads ASN. 150-153 provides a ligand contact to substrate; that stretch reads DSAR. The Proton acceptor role is filled by His177. Tyr220 is modified (phosphotyrosine). Thr229 contacts substrate.

This sequence belongs to the LDH/MDH superfamily. LDH family. In terms of assembly, homotetramer.

Its subcellular location is the cytoplasm. The catalysed reaction is (S)-lactate + NAD(+) = pyruvate + NADH + H(+). It participates in fermentation; pyruvate fermentation to lactate; (S)-lactate from pyruvate: step 1/1. Its function is as follows. Catalyzes the conversion of lactate to pyruvate. The polypeptide is L-lactate dehydrogenase (Mycoplasma pneumoniae (strain ATCC 29342 / M129 / Subtype 1) (Mycoplasmoides pneumoniae)).